Consider the following 944-residue polypeptide: LPS-assembly protein LptD (944 aa).

Residues 1–33 form the signal peptide; it reads MALKSPAFRRKFPLLVTGGLLALQPLATSFVVA. Residues 52–102 are disordered; sequence KATGNLPPRPVHPGAAAASSGAEAPGEVGEAQAEKPMLVTESKGRGLKSRS. Positions 64 to 82 are enriched in low complexity; that stretch reads PGAAAASSGAEAPGEVGEA.

It belongs to the LptD family. Component of the lipopolysaccharide transport and assembly complex. Interacts with LptE and LptA.

Its subcellular location is the cell outer membrane. In terms of biological role, together with LptE, is involved in the assembly of lipopolysaccharide (LPS) at the surface of the outer membrane. The protein is LPS-assembly protein LptD of Pseudomonas entomophila (strain L48).